We begin with the raw amino-acid sequence, 734 residues long: Photosystem I P700 chlorophyll a apoprotein A2 (734 aa).

A run of 8 helical transmembrane segments spans residues 46–69, 135–158, 175–199, 273–291, 330–353, 369–395, 417–439, and 517–535; these read IFASHFGQLAIIFLWTSGNLFHVA, LYTGALFLLIVSAVALFAGWLHLQ, LNHHLSGLFGVSSLAWTGHLVHVAI, IAHHHLAIAVLFIIAGHMY, LHFQLGLALASLGVVTSLVAQHMY, AALYTHHQYIAGFIMTGAFAHGAIFFV, AIISHLSWASLFLGFHTLGLYVH, and FLVHHAIALGLHTTTLILV. [4Fe-4S] cluster is bound by residues Cys559 and Cys568. The next 2 membrane-spanning stretches (helical) occupy residues 575-596 and 643-665; these read AFYLAVFWMLNTIGWVTFYWHW and LSVWAWMFLFGHLVWATGFMFLI. Residues His654, Met662, and Tyr670 each contribute to the chlorophyll a site. Trp671 provides a ligand contact to phylloquinone. A helical membrane pass occupies residues 707 to 727; the sequence is LVGLAHFSVGYVLTYAAFLIA.

This sequence belongs to the PsaA/PsaB family. In terms of assembly, the PsaA/B heterodimer binds the P700 chlorophyll special pair and subsequent electron acceptors. PSI consists of a core antenna complex that captures photons, and an electron transfer chain that converts photonic excitation into a charge separation. The eukaryotic PSI reaction center is composed of at least 11 subunits. The cofactor is P700 is a chlorophyll a/chlorophyll a' dimer, A0 is one or more chlorophyll a, A1 is one or both phylloquinones and FX is a shared 4Fe-4S iron-sulfur center..

It is found in the plastid. Its subcellular location is the chloroplast thylakoid membrane. The enzyme catalyses reduced [plastocyanin] + hnu + oxidized [2Fe-2S]-[ferredoxin] = oxidized [plastocyanin] + reduced [2Fe-2S]-[ferredoxin]. In terms of biological role, psaA and PsaB bind P700, the primary electron donor of photosystem I (PSI), as well as the electron acceptors A0, A1 and FX. PSI is a plastocyanin-ferredoxin oxidoreductase, converting photonic excitation into a charge separation, which transfers an electron from the donor P700 chlorophyll pair to the spectroscopically characterized acceptors A0, A1, FX, FA and FB in turn. Oxidized P700 is reduced on the lumenal side of the thylakoid membrane by plastocyanin. The polypeptide is Photosystem I P700 chlorophyll a apoprotein A2 (Chlorokybus atmophyticus (Soil alga)).